A 267-amino-acid chain; its full sequence is PF03932 family protein CutC (267 aa).

Belongs to the CutC family.

Its subcellular location is the cytoplasm. This Xylella fastidiosa (strain 9a5c) protein is PF03932 family protein CutC.